Reading from the N-terminus, the 282-residue chain is Undecaprenyl-diphosphatase (282 aa).

The next 6 membrane-spanning stretches (helical) occupy residues 51–71, 87–107, 115–135, 191–211, 229–249, and 259–279; these read TLVA…AAVI, MGWM…LFET, SLYW…LAEG, ATAA…AGLY, NILV…AFLL, and IFIA…ATGV.

This sequence belongs to the UppP family.

It is found in the cell inner membrane. It carries out the reaction di-trans,octa-cis-undecaprenyl diphosphate + H2O = di-trans,octa-cis-undecaprenyl phosphate + phosphate + H(+). Its function is as follows. Catalyzes the dephosphorylation of undecaprenyl diphosphate (UPP). Confers resistance to bacitracin. This is Undecaprenyl-diphosphatase from Pelodictyon phaeoclathratiforme (strain DSM 5477 / BU-1).